Reading from the N-terminus, the 448-residue chain is Probable 3-ketoacyl-CoA thiolase (448 aa).

Residue cysteine 110 is the Acyl-thioester intermediate of the active site. Active-site proton acceptor residues include histidine 402 and cysteine 432.

This sequence belongs to the thiolase-like superfamily. Thiolase family.

The protein resides in the mitochondrion. The enzyme catalyses an acyl-CoA + acetyl-CoA = a 3-oxoacyl-CoA + CoA. The protein operates within lipid metabolism; fatty acid beta-oxidation. Its function is as follows. Mitochondrial enzyme that catalyzes reactions of the mitochondrial beta-oxidation pathway. This Caenorhabditis elegans protein is Probable 3-ketoacyl-CoA thiolase.